A 386-amino-acid chain; its full sequence is V-type proton ATPase subunit B 2 (386 aa).

The protein belongs to the ATPase alpha/beta chains family. As to quaternary structure, V-ATPase is a heteromultimeric enzyme composed of a peripheral catalytic V1 complex (main components: subunits A, B, C, D, E, and F) attached to an integral membrane V0 proton pore complex (main component: the proteolipid protein).

Non-catalytic subunit of the peripheral V1 complex of vacuolar ATPase. V-ATPase is responsible for acidifying a variety of intracellular compartments in eukaryotic cells. The protein is V-type proton ATPase subunit B 2 of Gossypium hirsutum (Upland cotton).